We begin with the raw amino-acid sequence, 59 residues long: uncharacterized protein (59 aa).

The next 2 membrane-spanning stretches (helical) occupy residues 1–21 (MNMY…YIFI) and 30–50 (GSWI…PYFY).

Its subcellular location is the cell membrane. This is an uncharacterized protein from Bacillus subtilis (strain 168).